Consider the following 476-residue polypeptide: Cardiolipin synthase (476 aa).

The next 2 membrane-spanning stretches (helical) occupy residues 2-22 (HLFINMIFLINIVFIISIIFI) and 31-51 (WAWILILTFLPILGFIIYILF). PLD phosphodiesterase domains lie at 207-234 (INYRNHRKILIIDSKVAFLGGFNIGDEY) and 389-416 (EKGFLHAKTIVADSSICSVGTANMDIRS). Residues H212, K214, D219, H394, K396, and D401 contribute to the active site.

Belongs to the phospholipase D family. Cardiolipin synthase subfamily.

The protein resides in the cell membrane. It carries out the reaction 2 a 1,2-diacyl-sn-glycero-3-phospho-(1'-sn-glycerol) = a cardiolipin + glycerol. Its function is as follows. Catalyzes the reversible phosphatidyl group transfer from one phosphatidylglycerol molecule to another to form cardiolipin (CL) (diphosphatidylglycerol) and glycerol. In Clostridium perfringens (strain ATCC 13124 / DSM 756 / JCM 1290 / NCIMB 6125 / NCTC 8237 / Type A), this protein is Cardiolipin synthase (cls).